We begin with the raw amino-acid sequence, 121 residues long: Large ribosomal subunit protein bL19 (121 aa).

Belongs to the bacterial ribosomal protein bL19 family.

This protein is located at the 30S-50S ribosomal subunit interface and may play a role in the structure and function of the aminoacyl-tRNA binding site. In Neisseria meningitidis serogroup C (strain 053442), this protein is Large ribosomal subunit protein bL19.